The chain runs to 859 residues: Leucine--tRNA ligase (859 aa).

The 'HIGH' region signature appears at 42–52; the sequence is PYPSGRLHMGH. The 'KMSKS' region motif lies at 618–622; the sequence is KMSKS. Residue Lys-621 coordinates ATP.

This sequence belongs to the class-I aminoacyl-tRNA synthetase family.

It is found in the cytoplasm. The catalysed reaction is tRNA(Leu) + L-leucine + ATP = L-leucyl-tRNA(Leu) + AMP + diphosphate. This is Leucine--tRNA ligase from Shewanella baltica (strain OS223).